Here is a 414-residue protein sequence, read N- to C-terminus: Cytosolic-abundant heat soluble protein 89226 (414 aa).

Composition is skewed to basic and acidic residues over residues 27-45 (IGED…DKRP) and 69-84 (AGQR…ERLR). A disordered region spans residues 27–155 (IGEDRGKEDP…SNPGMNNGMT (129 aa)). 2 stretches are compositionally biased toward low complexity: residues 86–101 (SRSS…VEPS) and 120–134 (SSNR…SSSD). The segment covering 142–155 (ASRNSNPGMNNGMT) has biased composition (polar residues). 2 CAHS motif regions span residues 305–323 (YRNA…LERQ) and 342–360 (QQQE…LEQE). Positions 341–376 (RQQQEIRLEAEYAMRALEQERVNARAALDQAMASTN) form a coiled coil. The span at 388–405 (THSQGRVTTTSESRTSQA) shows a compositional bias: polar residues. The tract at residues 388–414 (THSQGRVTTTSESRTSQARGPATAAVI) is disordered.

The protein belongs to the Cytosolic-abundant heat soluble protein (CAHS) family.

The protein localises to the cytoplasm. CAHS proteins are cytosolic heat soluble proteins that seem to contribute to the anhydrobiosis in tardigrades, but their specific mechanisms are yet to be identified. It is possible that protection during anhydrobiosis might occur via the stabilization of vitrifying small molecules such as sugars, but not via the direct glass transition of CAHS proteins themselves. In Hypsibius exemplaris (Freshwater tardigrade), this protein is Cytosolic-abundant heat soluble protein 89226.